Reading from the N-terminus, the 255-residue chain is H-2 class II histocompatibility antigen, E-K alpha chain (255 aa).

The signal sequence occupies residues 1–25 (MATIGALVLRFFFIAVLMSSQKSWA). The interval 26-109 (IKEEHTIIQA…ERSNNTPDAN (84 aa)) is alpha-1. At 26–216 (IKEEHTIIQA…EKTLLPETKE (191 aa)) the chain is on the extracellular side. Residues 110–203 (VAPEVTVLSR…GLEEPLRKHW (94 aa)) form an alpha-2 region. An Ig-like C1-type domain is found at 112–204 (PEVTVLSRSP…LEEPLRKHWE (93 aa)). Cys132 and Cys188 form a disulfide bridge. N-linked (GlcNAc...) asparagine glycosylation is present at Asn143. The tract at residues 204-216 (EFEEKTLLPETKE) is connecting peptide. The helical transmembrane segment at 217–242 (NVVCALGLFVGLVGIVVGIILIMKGI) threads the bilayer. The Cytoplasmic portion of the chain corresponds to 243–255 (KKRNVVERRQGAL).

Belongs to the MHC class II family.

Its subcellular location is the membrane. The polypeptide is H-2 class II histocompatibility antigen, E-K alpha chain (Mus musculus (Mouse)).